The following is a 151-amino-acid chain: D-aminoacyl-tRNA deacylase (151 aa).

The Gly-cisPro motif, important for rejection of L-amino acids signature appears at 142 to 143; the sequence is GP.

It belongs to the DTD family. As to quaternary structure, homodimer.

Its subcellular location is the cytoplasm. It carries out the reaction glycyl-tRNA(Ala) + H2O = tRNA(Ala) + glycine + H(+). It catalyses the reaction a D-aminoacyl-tRNA + H2O = a tRNA + a D-alpha-amino acid + H(+). In terms of biological role, an aminoacyl-tRNA editing enzyme that deacylates mischarged D-aminoacyl-tRNAs. Also deacylates mischarged glycyl-tRNA(Ala), protecting cells against glycine mischarging by AlaRS. Acts via tRNA-based rather than protein-based catalysis; rejects L-amino acids rather than detecting D-amino acids in the active site. By recycling D-aminoacyl-tRNA to D-amino acids and free tRNA molecules, this enzyme counteracts the toxicity associated with the formation of D-aminoacyl-tRNA entities in vivo and helps enforce protein L-homochirality. This chain is D-aminoacyl-tRNA deacylase, found in Psychrobacter cryohalolentis (strain ATCC BAA-1226 / DSM 17306 / VKM B-2378 / K5).